The following is a 105-amino-acid chain: Endoribonuclease MazF1 (105 aa).

The protein belongs to the PemK/MazF family. In terms of assembly, forms a complex with cognate antitoxin MazE1.

Functionally, toxic component of a type II toxin-antitoxin (TA) system. Acts as an endoribonuclease on single-strand RNA, cleaving between the first and second bases in the sequence UCGCU. Neutralized by coexpression with cognate antitoxin MazE1. This Mycobacterium bovis (strain ATCC BAA-935 / AF2122/97) protein is Endoribonuclease MazF1 (mazF1).